Here is a 948-residue protein sequence, read N- to C-terminus: Isoleucine--tRNA ligase (948 aa).

The 'HIGH' region motif lies at 58 to 68 (PYANGDIHIGH). Residue glutamate 566 participates in L-isoleucyl-5'-AMP binding. The short motif at 607 to 611 (KMSKS) is the 'KMSKS' region element. Lysine 610 is an ATP binding site. Positions 911, 914, 931, and 934 each coordinate Zn(2+).

Belongs to the class-I aminoacyl-tRNA synthetase family. IleS type 1 subfamily. In terms of assembly, monomer. Requires Zn(2+) as cofactor.

The protein resides in the cytoplasm. The catalysed reaction is tRNA(Ile) + L-isoleucine + ATP = L-isoleucyl-tRNA(Ile) + AMP + diphosphate. In terms of biological role, catalyzes the attachment of isoleucine to tRNA(Ile). As IleRS can inadvertently accommodate and process structurally similar amino acids such as valine, to avoid such errors it has two additional distinct tRNA(Ile)-dependent editing activities. One activity is designated as 'pretransfer' editing and involves the hydrolysis of activated Val-AMP. The other activity is designated 'posttransfer' editing and involves deacylation of mischarged Val-tRNA(Ile). This is Isoleucine--tRNA ligase from Vibrio vulnificus (strain YJ016).